A 247-amino-acid polypeptide reads, in one-letter code: 2,3-bisphosphoglycerate-dependent phosphoglycerate mutase (247 aa).

Substrate is bound by residues 8 to 15 (RHGESQWN), 21 to 22 (TG), R60, 87 to 90 (ERHY), K98, 114 to 115 (RR), and 183 to 184 (GN). Catalysis depends on H9, which acts as the Tele-phosphohistidine intermediate. Residue E87 is the Proton donor/acceptor of the active site.

The protein belongs to the phosphoglycerate mutase family. BPG-dependent PGAM subfamily.

The enzyme catalyses (2R)-2-phosphoglycerate = (2R)-3-phosphoglycerate. The protein operates within carbohydrate degradation; glycolysis; pyruvate from D-glyceraldehyde 3-phosphate: step 3/5. In terms of biological role, catalyzes the interconversion of 2-phosphoglycerate and 3-phosphoglycerate. This chain is 2,3-bisphosphoglycerate-dependent phosphoglycerate mutase, found in Chlorobium limicola (strain DSM 245 / NBRC 103803 / 6330).